A 430-amino-acid chain; its full sequence is Probable carboxypeptidase AO090003000058 (430 aa).

The first 16 residues, 1 to 16, serve as a signal peptide directing secretion; that stretch reads MKSIYSLVLCTALTAA. N-linked (GlcNAc...) asparagine glycosylation is present at asparagine 84. Aspartate 156 is a binding site for Zn(2+). Glutamate 188 serves as the catalytic Proton acceptor. Position 189 (glutamate 189) interacts with Zn(2+). The N-linked (GlcNAc...) asparagine glycan is linked to asparagine 285.

The protein belongs to the peptidase M20A family. It depends on Zn(2+) as a cofactor.

The protein resides in the secreted. The protein is Probable carboxypeptidase AO090003000058 of Aspergillus oryzae (strain ATCC 42149 / RIB 40) (Yellow koji mold).